We begin with the raw amino-acid sequence, 124 residues long: Fluoride-specific ion channel FluC (124 aa).

Helical transmembrane passes span 5-27 (LFVA…LMLQ), 42-62 (ILGS…EVSP), 63-83 (EIKA…STFS), and 95-115 (LVKA…VVYL). Na(+) is bound by residues Gly74 and Thr77.

The protein belongs to the fluoride channel Fluc/FEX (TC 1.A.43) family.

It is found in the cell inner membrane. It carries out the reaction fluoride(in) = fluoride(out). With respect to regulation, na(+) is not transported, but it plays an essential structural role and its presence is essential for fluoride channel function. Functionally, fluoride-specific ion channel. Important for reducing fluoride concentration in the cell, thus reducing its toxicity. The chain is Fluoride-specific ion channel FluC from Shewanella piezotolerans (strain WP3 / JCM 13877).